The chain runs to 691 residues: Glycine--tRNA ligase beta subunit (691 aa).

It belongs to the class-II aminoacyl-tRNA synthetase family. As to quaternary structure, tetramer of two alpha and two beta subunits.

The protein localises to the cytoplasm. It catalyses the reaction tRNA(Gly) + glycine + ATP = glycyl-tRNA(Gly) + AMP + diphosphate. In Levilactobacillus brevis (strain ATCC 367 / BCRC 12310 / CIP 105137 / JCM 1170 / LMG 11437 / NCIMB 947 / NCTC 947) (Lactobacillus brevis), this protein is Glycine--tRNA ligase beta subunit.